The primary structure comprises 881 residues: Alanine--tRNA ligase (881 aa).

The Zn(2+) site is built by His-568, His-572, Cys-670, and His-674.

This sequence belongs to the class-II aminoacyl-tRNA synthetase family. Requires Zn(2+) as cofactor.

It localises to the cytoplasm. It carries out the reaction tRNA(Ala) + L-alanine + ATP = L-alanyl-tRNA(Ala) + AMP + diphosphate. In terms of biological role, catalyzes the attachment of alanine to tRNA(Ala) in a two-step reaction: alanine is first activated by ATP to form Ala-AMP and then transferred to the acceptor end of tRNA(Ala). Also edits incorrectly charged Ser-tRNA(Ala) and Gly-tRNA(Ala) via its editing domain. This Moorella thermoacetica (strain ATCC 39073 / JCM 9320) protein is Alanine--tRNA ligase.